The following is a 1240-amino-acid chain: DNA-directed RNA polymerase subunit beta (1240 aa).

This sequence belongs to the RNA polymerase beta chain family. As to quaternary structure, the RNAP catalytic core consists of 2 alpha, 1 beta, 1 beta' and 1 omega subunit. When a sigma factor is associated with the core the holoenzyme is formed, which can initiate transcription.

The enzyme catalyses RNA(n) + a ribonucleoside 5'-triphosphate = RNA(n+1) + diphosphate. In terms of biological role, DNA-dependent RNA polymerase catalyzes the transcription of DNA into RNA using the four ribonucleoside triphosphates as substrates. The chain is DNA-directed RNA polymerase subunit beta from Rhodopirellula baltica (strain DSM 10527 / NCIMB 13988 / SH1).